The chain runs to 242 residues: Interleukin-34 (242 aa).

The N-terminal stretch at 1-20 (MPRGFTWLRYLGIFLGVALG) is a signal peptide. Asn76 is a glycosylation site (N-linked (GlcNAc...) asparagine). The interval 210–242 (TQLYPPPPWSPSSPPHSTGSVRPVRAQGEGLLP) is disordered. Residues 213-223 (YPPPPWSPSSP) are compositionally biased toward pro residues.

This sequence belongs to the IL-34 family. As to quaternary structure, homodimer. Interacts with CSF1R. In terms of tissue distribution, detected in the sinusoidal epithelium in the red pulp of spleen (at protein level). Predominantly expressed in spleen. Also detected in a range of other tissues including heart, brain, lung, liver, kidney, thymus, testis, ovary, small intestine, prostate and colon.

The protein resides in the secreted. In terms of biological role, cytokine that promotes the proliferation, survival and differentiation of monocytes and macrophages. Promotes the release of pro-inflammatory chemokines, and thereby plays an important role in innate immunity and in inflammatory processes. Plays an important role in the regulation of osteoclast proliferation and differentiation, and in the regulation of bone resorption. Signaling via CSF1R and its downstream effectors stimulates phosphorylation of MAPK1/ERK2 AND MAPK3/ERK1. The protein is Interleukin-34 (IL34) of Homo sapiens (Human).